The primary structure comprises 58 residues: MAGAKVKTEQIHLQCTECKRKNYITTKNKQNVPEKLELKKYCPHDKKHTIHKELKVSR.

It belongs to the bacterial ribosomal protein bL33 family.

The polypeptide is Large ribosomal subunit protein bL33 (Brachyspira hyodysenteriae (strain ATCC 49526 / WA1)).